Consider the following 530-residue polypeptide: Calcium uptake protein 3, mitochondrial (530 aa).

The transit peptide at 1 to 43 (MAALRRLLWPPPRVSPPLCAHQPLLGPWGRPAVTTLGLPGRPF) directs the protein to the mitochondrion. The segment at 92–115 (GSPATGRPSKSAATEPEDPPRGRG) is disordered. The 36-residue stretch at 232–267 (KPHAGFRIAFNMFDTDGNEMVDKKEFLVLQEIFRKK) folds into the EF-hand 1 domain. Ca(2+) is bound by residues Asp-245, Asp-247, Asn-249, Met-251, Asp-253, and Glu-256. In terms of domain architecture, EF-hand 2; degenerate spans 401–436 (VENTSVFLENVRYSIPEEKGITFDEFRSFFQFLNNL). In terms of domain architecture, EF-hand 3 spans 470–505 (FSPHLVNTVFKIFDVDKDDQLSYKEFIGIMKDRLHR). Asp-483, Asp-485, Asp-487, Gln-489, and Glu-494 together coordinate Ca(2+).

The protein belongs to the MICU1 family. MICU3 subfamily. Heterodimer; disulfide-linked; heterodimerizes with MICU1. Component of the uniplex complex, composed of MCU, EMRE/SMDT1, MICU1 and MICU3 in a 4:4:1:1 stoichiometry. In terms of tissue distribution, specifically expressed in the central nervous system and skeletal muscle.

It localises to the mitochondrion intermembrane space. The protein localises to the mitochondrion inner membrane. Tissue-specific calcium sensor of the mitochondrial calcium uniporter (MCU) channel, which specifically regulates MCU channel activity in the central nervous system and skeletal muscle. Senses calcium level via its EF-hand domains: compared to MICU1 and MICU2, MICU3 has a higher affinity for calcium. MICU1 and MICU3 form a disulfide-linked heterodimer that stimulates and inhibits MCU activity, depending on the concentration of calcium. At low calcium levels, MICU1 occludes the pore of the MCU channel, preventing mitochondrial calcium uptake. At higher calcium levels, calcium-binding to MICU1 and MICU3 induces a conformational change that weakens MCU-MICU1 interactions and moves the MICU1-MICU3 heterodimer away from the pore, allowing calcium permeation through the MCU channel. The high calcium affinity of MICU3 lowers the calcium threshold necessary for calcium permeation through the MCU channel. The MICU1-MICU3 heterodimer promotes flexibility of neurotransmission in neuronal cells by enhancing mitochondrial calcium uptake in presynapses. It is also required to increase mitochondrial calcium uptake in skeletal muscle cells, thereby increasing ATP production. The chain is Calcium uptake protein 3, mitochondrial from Homo sapiens (Human).